The primary structure comprises 437 residues: Transcription factor AP-2-alpha (437 aa).

Residue Lys10 forms a Glycyl lysine isopeptide (Lys-Gly) (interchain with G-Cter in SUMO); alternate linkage. Lys10 participates in a covalent cross-link: Glycyl lysine isopeptide (Lys-Gly) (interchain with G-Cter in SUMO2); alternate. Positions 14–107 are disordered; it reads CEDRHDGTSN…GQRQSQESGL (94 aa). The PPxY motif signature appears at 57–62; that stretch reads YFPPPY. Composition is skewed to low complexity over residues 65–74 and 88–101; these read IYPQSQDPYS and QPQP…GQRQ. Residues Lys177 and Lys184 each participate in a glycyl lysine isopeptide (Lys-Gly) (interchain with G-Cter in SUMO2) cross-link. Ser239 is subject to Phosphoserine; by PKA. Residues 280–410 form an H-S-H (helix-span-helix), dimerization region; it reads RRKAANVTLL…YLTEALKAMD (131 aa). Polar residues predominate over residues 414-427; it reads LSNNPNSHTDNNAK. The tract at residues 414–437 is disordered; that stretch reads LSNNPNSHTDNNAKSSDKEEKHRK. Over residues 428–437 the composition is skewed to basic and acidic residues; it reads SSDKEEKHRK.

This sequence belongs to the AP-2 family. In terms of assembly, binds DNA as a dimer. Can form homodimers or heterodimers with other AP-2 family members. Interacts with WWOX. Interacts with CITED4. Interacts with UBE2I. Interacts with RALBP1 in a complex also containing EPN1 and NUMB during interphase and mitosis. Interacts with KCTD1; this interaction represses transcription activation. Interacts (via C-terminus) with CITED2 (via C-terminus); the interaction stimulates TFAP2A-transcriptional activation. Interacts (via N-terminus) with EP300 (via N-terminus); the interaction requires CITED2. Interacts with KCTD15; this interaction inhibits TFAP2A transcriptional activation. In terms of processing, sumoylated on Lys-10; which inhibits transcriptional activity.

Its subcellular location is the nucleus. Its function is as follows. Sequence-specific DNA-binding protein that interacts with inducible viral and cellular enhancer elements to regulate transcription of selected genes. AP-2 factors bind to the consensus sequence 5'-GCCNNNGGC-3' and activate genes involved in a large spectrum of important biological functions including proper eye, face, body wall, limb and neural tube development. They also suppress a number of genes including MCAM/MUC18, C/EBP alpha and MYC. AP-2-alpha is the only AP-2 protein required for early morphogenesis of the lens vesicle. Together with the CITED2 coactivator, stimulates the PITX2 P1 promoter transcription activation. Associates with chromatin to the PITX2 P1 promoter region. This Homo sapiens (Human) protein is Transcription factor AP-2-alpha (TFAP2A).